Here is a 142-residue protein sequence, read N- to C-terminus: Transcription antitermination protein NusB (142 aa).

The protein belongs to the NusB family.

Involved in transcription antitermination. Required for transcription of ribosomal RNA (rRNA) genes. Binds specifically to the boxA antiterminator sequence of the ribosomal RNA (rrn) operons. The protein is Transcription antitermination protein NusB of Borrelia garinii subsp. bavariensis (strain ATCC BAA-2496 / DSM 23469 / PBi) (Borreliella bavariensis).